Consider the following 129-residue polypeptide: uncharacterized protein (129 aa).

Positions 86–96 (NDGFSSDDEPE) are enriched in acidic residues. The disordered stretch occupies residues 86-129 (NDGFSSDDEPEEHVILTEDNQGEPSETPQATFDITEFIKTEDED). Residues 103-117 (EDNQGEPSETPQATF) show a composition bias toward polar residues.

This sequence belongs to the asfivirus D129L family.

This is an uncharacterized protein from African swine fever virus (isolate Tick/South Africa/Pretoriuskop Pr4/1996) (ASFV).